A 533-amino-acid polypeptide reads, in one-letter code: Peptidyl-prolyl cis-trans isomerase-like 2 (533 aa).

The U-box domain maps to 38–111 (KRLPFYCCSL…DEYFCPVTYK (74 aa)). Residues 284 to 438 (KKSYARIITN…REIKIKQIQM (155 aa)) form the PPIase cyclophilin-type domain. Residues 443-519 (FEEYQRRLKN…SNEGEELQKK (77 aa)) are a coiled coil. The span at 454 to 477 (LTHEANAERENEEMRKRREKEEKM) shows a compositional bias: basic and acidic residues. Residues 454 to 533 (LTHEANAERE…KTTFGNFDNF (80 aa)) form a disordered region. Polar residues predominate over residues 523 to 533 (TKTTFGNFDNF).

The protein belongs to the cyclophilin-type PPIase family. PPIL2 subfamily.

It is found in the nucleus. The enzyme catalyses [protein]-peptidylproline (omega=180) = [protein]-peptidylproline (omega=0). It catalyses the reaction S-ubiquitinyl-[E2 ubiquitin-conjugating enzyme]-L-cysteine + [acceptor protein]-L-lysine = [E2 ubiquitin-conjugating enzyme]-L-cysteine + N(6)-ubiquitinyl-[acceptor protein]-L-lysine.. It functions in the pathway protein modification; protein ubiquitination. Its function is as follows. May catalyze the cis-trans isomerization of proline imidic peptide bonds in oligopeptides thereby assisting the folding of proteins. May also function as a chaperone, playing a role in intracellular transport of proteins. May also have a protein ubiquitin ligase activity acting as an E3 ubiquitin protein ligase or as a ubiquitin-ubiquitin ligase promoting elongation of ubiquitin chains on proteins. The polypeptide is Peptidyl-prolyl cis-trans isomerase-like 2 (cyp14) (Rhizopus delemar (strain RA 99-880 / ATCC MYA-4621 / FGSC 9543 / NRRL 43880) (Mucormycosis agent)).